A 94-amino-acid chain; its full sequence is Protein S100-A1 (94 aa).

EF-hand domains follow at residues 13–48 and 50–85; these read INVF…FLDA and KDVD…LTVA. Ca(2+)-binding residues include K28, E33, D63, N65, D67, E69, and E74. C86 carries the post-translational modification S-nitrosocysteine.

It belongs to the S-100 family. In terms of assembly, dimer of either two alpha chains, or two beta chains, or one alpha and one beta chain. Also forms heterodimers with S100P. Interacts with AGER. Interacts with CAPZA1. Interacts with FKBP4. Interacts with RYR1 and RYR2. Interacts with CACYBP in a calcium-dependent manner. Interacts with PPP5C (via TPR repeats); the interaction is calcium-dependent and modulates PPP5C activity. Interacts with ATP2A2 and PLN in a Ca(2+)-dependent manner. Interacts with mitochondrial F1-ATPase subunits ATP5F1A and ATP5F1B; these interactions increase F1-ATPase activity. In terms of processing, glutathionylated; glutathionylation increases affinity to calcium about 10-fold. As to expression, highly prevalent in heart. Also found in lesser quantities in skeletal muscle and brain.

It is found in the cytoplasm. The protein resides in the sarcoplasmic reticulum. The protein localises to the mitochondrion. Its function is as follows. Small calcium binding protein that plays important roles in several biological processes such as Ca(2+) homeostasis, chondrocyte biology and cardiomyocyte regulation. In response to an increase in intracellular Ca(2+) levels, binds calcium which triggers conformational changes. These changes allow interactions with specific target proteins and modulate their activity. Regulates a network in cardiomyocytes controlling sarcoplasmic reticulum Ca(2+) cycling and mitochondrial function through interaction with the ryanodine receptors RYR1 and RYR2, sarcoplasmic reticulum Ca(2+)-ATPase/ATP2A2 and mitochondrial F1-ATPase. Facilitates diastolic Ca(2+) dissociation and myofilament mechanics in order to improve relaxation during diastole. This chain is Protein S100-A1 (S100A1), found in Homo sapiens (Human).